A 204-amino-acid polypeptide reads, in one-letter code: MGAYKYMQELWRKKQSDVMRFLLRVRCWQYRQLSALHRAPRPTRPDKARRLGYKAKQGYVIYRVRVRRGGRKRPVPKGATYGKPVHHGVNQLKFARSLQSVAEERAGRHCGGLRVLNSYWVGEDSTYKFFEVILIDTFHKAIRRNPDTQWITKAVHKHREMRGLTSAGKKSRGLGKGHKFHLTIGGSRRAPWRRRNTLQLRRYR.

The tract at residues 161–180 (MRGLTSAGKKSRGLGKGHKF) is disordered. Residues 169–180 (KKSRGLGKGHKF) show a composition bias toward basic residues.

The protein belongs to the eukaryotic ribosomal protein eL15 family. As to quaternary structure, component of the large ribosomal subunit.

The protein resides in the cytoplasm. In terms of biological role, component of the large ribosomal subunit. The ribosome is a large ribonucleoprotein complex responsible for the synthesis of proteins in the cell. The polypeptide is Large ribosomal subunit protein eL15 (rpl15) (Ictalurus punctatus (Channel catfish)).